The chain runs to 95 residues: Large ribosomal subunit protein uL23 (95 aa).

Belongs to the universal ribosomal protein uL23 family. In terms of assembly, part of the 50S ribosomal subunit. Contacts protein L29, and trigger factor when it is bound to the ribosome.

Functionally, one of the early assembly proteins it binds 23S rRNA. One of the proteins that surrounds the polypeptide exit tunnel on the outside of the ribosome. Forms the main docking site for trigger factor binding to the ribosome. The polypeptide is Large ribosomal subunit protein uL23 (Rubrobacter xylanophilus (strain DSM 9941 / JCM 11954 / NBRC 16129 / PRD-1)).